The primary structure comprises 233 residues: Probable septum site-determining protein MinC (233 aa).

Residues 98–123 (LTEGKEKAPRPAPSEPTPPPPPVANQ) are disordered. The segment covering 107–120 (RPAPSEPTPPPPPV) has biased composition (pro residues).

This sequence belongs to the MinC family. As to quaternary structure, interacts with MinD and FtsZ.

Functionally, cell division inhibitor that blocks the formation of polar Z ring septums. Rapidly oscillates between the poles of the cell to destabilize FtsZ filaments that have formed before they mature into polar Z rings. Prevents FtsZ polymerization. The sequence is that of Probable septum site-determining protein MinC from Klebsiella pneumoniae (strain 342).